A 149-amino-acid polypeptide reads, in one-letter code: Oocyte-expressed protein homolog (149 aa).

Residues 1-23 (MVDDAGTAESQRGKQTPADSLEQ) form a disordered region. Positions 8–18 (AESQRGKQTPA) are enriched in polar residues. A KH; atypical domain is found at 49–110 (PLVFYLEAWL…SVQNRVKSML (62 aa)).

Belongs to the KHDC1 family. As to quaternary structure, component of the subcortical maternal complex (SCMC), at least composed of NLRP5, KHDC3, OOEP, and TLE6. Within the complex, interacts with NLRP5, KHDC3 and TLE6. As part of the SCMC interacts with the SCMC-associated protein NLRP4F. The SCMC may facilitate translocation of its components between the nuclear and cytoplasmic compartments. Forms a scaffold complex with KHDC3/FILIA, and interacts with BLM and TRIM25 at DNA replication forks.

It localises to the cytoplasm. The protein resides in the nucleus. Functionally, component of the subcortical maternal complex (SCMC), a multiprotein complex that plays a key role in early embryonic development. The SCMC complex is a structural constituent of cytoplasmic lattices, which consist in fibrous structures found in the cytoplasm of oocytes and preimplantation embryos. They are required to store maternal proteins critical for embryonic development, such as proteins that control epigenetic reprogramming of the preimplantation embryo, and prevent their degradation or activation. As part of the OOEP-KHDC3 scaffold, recruits BLM and TRIM25 to DNA replication forks, thereby promoting the ubiquitination of BLM by TRIM25, enhancing BLM retainment at replication forks and therefore promoting stalled replication fork restart. Positively regulates the homologous recombination-mediated DNA double-strand break (DSB) repair pathway by regulating ATM activation and RAD51 recruitment to DSBs in oocytes. Thereby contributes to oocyte survival and the resumption and completion of meiosis. The sequence is that of Oocyte-expressed protein homolog (OOEP) from Papio anubis (Olive baboon).